A 740-amino-acid chain; its full sequence is Ethylene receptor 1 (740 aa).

Transmembrane regions (helical) follow at residues 23–43 (ISDFFIALAYFSIPLELIYFV), 54–74 (VLVQFGAFIVLCGATHLINLW), and 92–112 (VLTAVVSCATALMLVHIIPDL). Cys65 and His69 together coordinate Cu cation. One can recognise a GAF domain in the interval 158-307 (DRHTILKTTL…VVADQVAVAL (150 aa)). The 239-residue stretch at 350-588 (VMNHEMRTPM…TFIVKLGIAD (239 aa)) folds into the Histidine kinase domain. The residue at position 353 (His353) is a Phosphohistidine; by autocatalysis. A Response regulatory domain is found at 614–731 (KVLVMDDNGV…KMRSVLSELI (118 aa)). Asp662 is modified (4-aspartylphosphate).

Belongs to the ethylene receptor family. Homodimer; disulfide-linked. Requires Cu cation as cofactor. Post-translationally, activation probably requires a transfer of a phosphate group between a His in the transmitter domain and an Asp of the receiver domain. As to expression, in seeds and placenta.

The protein resides in the endoplasmic reticulum membrane. The enzyme catalyses ATP + protein L-histidine = ADP + protein N-phospho-L-histidine.. May act early in the ethylene signal transduction pathway, possibly as an ethylene receptor, or as a regulator of the pathway. In Cucumis melo var. cantalupensis (Netted muskmelon), this protein is Ethylene receptor 1 (ETR1).